Reading from the N-terminus, the 91-residue chain is Probable Fe(2+)-trafficking protein (91 aa).

Belongs to the Fe(2+)-trafficking protein family.

Functionally, could be a mediator in iron transactions between iron acquisition and iron-requiring processes, such as synthesis and/or repair of Fe-S clusters in biosynthetic enzymes. The protein is Probable Fe(2+)-trafficking protein of Burkholderia multivorans (strain ATCC 17616 / 249).